Reading from the N-terminus, the 397-residue chain is S-adenosylmethionine synthase (397 aa).

ATP is bound at residue His15. Asp17 is a binding site for Mg(2+). Glu43 provides a ligand contact to K(+). 2 residues coordinate L-methionine: Glu56 and Gln99. Positions Gln99–Glu109 are flexible loop. ATP is bound by residues Asp175–Lys177, Arg241–Phe242, Asp250, Arg256–Lys257, Ala273, and Lys277. Position 250 (Asp250) interacts with L-methionine. Lys281 lines the L-methionine pocket.

It belongs to the AdoMet synthase family. As to quaternary structure, homotetramer; dimer of dimers. Requires Mg(2+) as cofactor. It depends on K(+) as a cofactor.

The protein localises to the cytoplasm. The catalysed reaction is L-methionine + ATP + H2O = S-adenosyl-L-methionine + phosphate + diphosphate. It participates in amino-acid biosynthesis; S-adenosyl-L-methionine biosynthesis; S-adenosyl-L-methionine from L-methionine: step 1/1. In terms of biological role, catalyzes the formation of S-adenosylmethionine (AdoMet) from methionine and ATP. The overall synthetic reaction is composed of two sequential steps, AdoMet formation and the subsequent tripolyphosphate hydrolysis which occurs prior to release of AdoMet from the enzyme. This is S-adenosylmethionine synthase from Clostridioides difficile (strain 630) (Peptoclostridium difficile).